A 335-amino-acid chain; its full sequence is Eukaryotic translation initiation factor 3 subunit I (335 aa).

WD repeat units follow at residues 8-47 (GHER…RLGT), 50-91 (GHQG…KTWD), 145-184 (CAES…LLFN), 189-228 (EPDL…VMKT), and 286-325 (GHFG…FDFT).

This sequence belongs to the eIF-3 subunit I family. As to quaternary structure, component of the eukaryotic translation initiation factor 3 (eIF-3) complex.

Its subcellular location is the cytoplasm. Its function is as follows. Component of the eukaryotic translation initiation factor 3 (eIF-3) complex, which is involved in protein synthesis of a specialized repertoire of mRNAs and, together with other initiation factors, stimulates binding of mRNA and methionyl-tRNAi to the 40S ribosome. The eIF-3 complex specifically targets and initiates translation of a subset of mRNAs involved in cell proliferation. The sequence is that of Eukaryotic translation initiation factor 3 subunit I (tif34) from Sclerotinia sclerotiorum (strain ATCC 18683 / 1980 / Ss-1) (White mold).